Consider the following 274-residue polypeptide: Bis(5'-nucleosyl)-tetraphosphatase, symmetrical (274 aa).

This sequence belongs to the Ap4A hydrolase family.

It catalyses the reaction P(1),P(4)-bis(5'-adenosyl) tetraphosphate + H2O = 2 ADP + 2 H(+). Hydrolyzes diadenosine 5',5'''-P1,P4-tetraphosphate to yield ADP. This chain is Bis(5'-nucleosyl)-tetraphosphatase, symmetrical, found in Janthinobacterium sp. (strain Marseille) (Minibacterium massiliensis).